We begin with the raw amino-acid sequence, 251 residues long: Triosephosphate isomerase (251 aa).

8–10 (NWK) contributes to the substrate binding site. The Electrophile role is filled by His-97. Glu-170 serves as the catalytic Proton acceptor. Residues Gly-176, Ser-215, and 236–237 (GG) contribute to the substrate site.

This sequence belongs to the triosephosphate isomerase family. Homodimer.

Its subcellular location is the cytoplasm. It catalyses the reaction D-glyceraldehyde 3-phosphate = dihydroxyacetone phosphate. The protein operates within carbohydrate biosynthesis; gluconeogenesis. It participates in carbohydrate degradation; glycolysis; D-glyceraldehyde 3-phosphate from glycerone phosphate: step 1/1. In terms of biological role, involved in the gluconeogenesis. Catalyzes stereospecifically the conversion of dihydroxyacetone phosphate (DHAP) to D-glyceraldehyde-3-phosphate (G3P). This chain is Triosephosphate isomerase, found in Nitratidesulfovibrio vulgaris (strain ATCC 29579 / DSM 644 / CCUG 34227 / NCIMB 8303 / VKM B-1760 / Hildenborough) (Desulfovibrio vulgaris).